A 640-amino-acid chain; its full sequence is Chaperone protein HtpG (640 aa).

The interval 1 to 348 (MAQYKFETEV…SEDLPLNVSR (348 aa)) is a; substrate-binding. The tract at residues 349–565 (EILQQNRILS…ETDPSLQMER (217 aa)) is b. The c stretch occupies residues 566-640 (MMRAMGQFNT…RLNRLMTNLK (75 aa)).

Belongs to the heat shock protein 90 family. As to quaternary structure, homodimer.

It is found in the cytoplasm. Its function is as follows. Molecular chaperone. Has ATPase activity. The polypeptide is Chaperone protein HtpG (Treponema denticola (strain ATCC 35405 / DSM 14222 / CIP 103919 / JCM 8153 / KCTC 15104)).